A 141-amino-acid chain; its full sequence is Flagellar assembly factor FliW (141 aa).

Belongs to the FliW family. In terms of assembly, interacts with translational regulator CsrA and flagellin(s).

Its subcellular location is the cytoplasm. Its function is as follows. Acts as an anti-CsrA protein, binds CsrA and prevents it from repressing translation of its target genes, one of which is flagellin. Binds to flagellin and participates in the assembly of the flagellum. This chain is Flagellar assembly factor FliW, found in Clostridium beijerinckii (strain ATCC 51743 / NCIMB 8052) (Clostridium acetobutylicum).